The sequence spans 836 residues: Protein IWS1 homolog A (836 aa).

Residues 1–542 (MEADNYSPEH…DMKSGKMGDY (542 aa)) form a disordered region. Composition is skewed to basic and acidic residues over residues 20-36 (QDER…EQRS), 43-122 (HQSE…DRSP), 133-148 (EPVR…DVPR), 157-186 (DERH…DKAP), 206-218 (DSKD…HAAS), 288-309 (VPVK…KASD), 370-386 (RSSE…KKLQ), and 458-469 (ERKSKTETKSAD). Residues 476 to 485 (SDSENEEENL) show a composition bias toward acidic residues. Positions 533–542 (DMKSGKMGDY) are enriched in basic and acidic residues. The TFIIS N-terminal domain maps to 631 to 709 (SAIKEWLTPL…NEWSRPIFGL (79 aa)). The tract at residues 714 to 746 (KGMTREEREQRDIEQMPQRRRMSSSGGQTPRRD) is disordered. Over residues 716–727 (MTREEREQRDIE) the composition is skewed to basic and acidic residues.

This sequence belongs to the IWS1 family.

The protein localises to the nucleus. In terms of biological role, transcription factor which plays a key role in defining the composition of the RNA polymerase II (RNAPII) elongation complex and in modulating the production of mature mRNA transcripts. The polypeptide is Protein IWS1 homolog A (iws1-a) (Xenopus laevis (African clawed frog)).